The primary structure comprises 785 residues: E3 UFM1-protein ligase 1 homolog (785 aa).

Residues 396–416 show a composition bias toward basic and acidic residues; that stretch reads MKHQDVIPDKESAENKADKRD. The disordered stretch occupies residues 396–473; that stretch reads MKHQDVIPDK…KSAGGKKGAK (78 aa). Residues 439 to 449 are compositionally biased toward basic residues; sequence KSTKKHARGHR.

This sequence belongs to the UFL1 family.

Functionally, E3 UFM1-protein ligase that mediates ufmylation of target proteins. This chain is E3 UFM1-protein ligase 1 homolog, found in Culex quinquefasciatus (Southern house mosquito).